We begin with the raw amino-acid sequence, 477 residues long: ATP synthase subunit beta (477 aa).

155–162 contacts ATP; sequence GGAGVGKT.

The protein belongs to the ATPase alpha/beta chains family. F-type ATPases have 2 components, CF(1) - the catalytic core - and CF(0) - the membrane proton channel. CF(1) has five subunits: alpha(3), beta(3), gamma(1), delta(1), epsilon(1). CF(0) has three main subunits: a(1), b(2) and c(9-12). The alpha and beta chains form an alternating ring which encloses part of the gamma chain. CF(1) is attached to CF(0) by a central stalk formed by the gamma and epsilon chains, while a peripheral stalk is formed by the delta and b chains.

Its subcellular location is the cell inner membrane. It catalyses the reaction ATP + H2O + 4 H(+)(in) = ADP + phosphate + 5 H(+)(out). Functionally, produces ATP from ADP in the presence of a proton gradient across the membrane. The catalytic sites are hosted primarily by the beta subunits. The polypeptide is ATP synthase subunit beta (Mesorhizobium japonicum (strain LMG 29417 / CECT 9101 / MAFF 303099) (Mesorhizobium loti (strain MAFF 303099))).